A 226-amino-acid chain; its full sequence is ATP synthase F(0) complex subunit a (226 aa).

6 helical membrane passes run 6 to 26 (FASF…IIMF), 68 to 88 (WSLM…LGLL), 97 to 117 (QLSM…FTGF), 136 to 156 (LLIP…PVAL), 164 to 184 (ITAG…LLNI), and 189 to 209 (AFIT…VALI).

The protein belongs to the ATPase A chain family. Component of the ATP synthase complex composed at least of ATP5F1A/subunit alpha, ATP5F1B/subunit beta, ATP5MC1/subunit c (homooctomer), MT-ATP6/subunit a, MT-ATP8/subunit 8, ATP5ME/subunit e, ATP5MF/subunit f, ATP5MG/subunit g, ATP5MK/subunit k, ATP5MJ/subunit j, ATP5F1C/subunit gamma, ATP5F1D/subunit delta, ATP5F1E/subunit epsilon, ATP5PF/subunit F6, ATP5PB/subunit b, ATP5PD/subunit d, ATP5PO/subunit OSCP. ATP synthase complex consists of a soluble F(1) head domain (subunits alpha(3) and beta(3)) - the catalytic core - and a membrane F(0) domain - the membrane proton channel (subunits c, a, 8, e, f, g, k and j). These two domains are linked by a central stalk (subunits gamma, delta, and epsilon) rotating inside the F1 region and a stationary peripheral stalk (subunits F6, b, d, and OSCP). Interacts with DNAJC30; interaction is direct.

Its subcellular location is the mitochondrion inner membrane. The catalysed reaction is H(+)(in) = H(+)(out). Its function is as follows. Subunit a, of the mitochondrial membrane ATP synthase complex (F(1)F(0) ATP synthase or Complex V) that produces ATP from ADP in the presence of a proton gradient across the membrane which is generated by electron transport complexes of the respiratory chain. ATP synthase complex consist of a soluble F(1) head domain - the catalytic core - and a membrane F(1) domain - the membrane proton channel. These two domains are linked by a central stalk rotating inside the F(1) region and a stationary peripheral stalk. During catalysis, ATP synthesis in the catalytic domain of F(1) is coupled via a rotary mechanism of the central stalk subunits to proton translocation. With the subunit c (ATP5MC1), forms the proton-conducting channel in the F(0) domain, that contains two crucial half-channels (inlet and outlet) that facilitate proton movement from the mitochondrial intermembrane space (IMS) into the matrix. Protons are taken up via the inlet half-channel and released through the outlet half-channel, following a Grotthuss mechanism. The polypeptide is ATP synthase F(0) complex subunit a (Sus scrofa (Pig)).